Consider the following 430-residue polypeptide: Bifunctional protein GlmU (430 aa).

Positions 1-223 are pyrophosphorylase; the sequence is MSFSVVILAA…KNEFQGVNSK (223 aa). Residues 8 to 11, lysine 22, and 81 to 82 contribute to the UDP-N-acetyl-alpha-D-glucosamine site; these read LAAG and GT. Aspartate 102 is a binding site for Mg(2+). The UDP-N-acetyl-alpha-D-glucosamine site is built by glycine 135, glutamate 149, asparagine 164, and asparagine 221. Asparagine 221 is a Mg(2+) binding site. The interval 224–244 is linker; it reads YDLANAEIVMQDRIKRHWMQQ. Residues 245–430 form an N-acetyltransferase region; sequence GVIMRLPQTI…DFYYKFFGKN (186 aa). UDP-N-acetyl-alpha-D-glucosamine contacts are provided by arginine 308 and lysine 325. Catalysis depends on histidine 336, which acts as the Proton acceptor. Residues tyrosine 339 and asparagine 350 each coordinate UDP-N-acetyl-alpha-D-glucosamine. Acetyl-CoA-binding positions include alanine 353, 359-360, serine 378, alanine 396, and arginine 413; that span reads NY.

The protein in the N-terminal section; belongs to the N-acetylglucosamine-1-phosphate uridyltransferase family. This sequence in the C-terminal section; belongs to the transferase hexapeptide repeat family. In terms of assembly, homotrimer. Requires Mg(2+) as cofactor.

Its subcellular location is the cytoplasm. It carries out the reaction alpha-D-glucosamine 1-phosphate + acetyl-CoA = N-acetyl-alpha-D-glucosamine 1-phosphate + CoA + H(+). The catalysed reaction is N-acetyl-alpha-D-glucosamine 1-phosphate + UTP + H(+) = UDP-N-acetyl-alpha-D-glucosamine + diphosphate. It participates in nucleotide-sugar biosynthesis; UDP-N-acetyl-alpha-D-glucosamine biosynthesis; N-acetyl-alpha-D-glucosamine 1-phosphate from alpha-D-glucosamine 6-phosphate (route II): step 2/2. The protein operates within nucleotide-sugar biosynthesis; UDP-N-acetyl-alpha-D-glucosamine biosynthesis; UDP-N-acetyl-alpha-D-glucosamine from N-acetyl-alpha-D-glucosamine 1-phosphate: step 1/1. It functions in the pathway bacterial outer membrane biogenesis; LPS lipid A biosynthesis. Catalyzes the last two sequential reactions in the de novo biosynthetic pathway for UDP-N-acetylglucosamine (UDP-GlcNAc). The C-terminal domain catalyzes the transfer of acetyl group from acetyl coenzyme A to glucosamine-1-phosphate (GlcN-1-P) to produce N-acetylglucosamine-1-phosphate (GlcNAc-1-P), which is converted into UDP-GlcNAc by the transfer of uridine 5-monophosphate (from uridine 5-triphosphate), a reaction catalyzed by the N-terminal domain. The sequence is that of Bifunctional protein GlmU from Nitratiruptor sp. (strain SB155-2).